The sequence spans 181 residues: Peptidyl-tRNA hydrolase (181 aa).

Tyr-14 contributes to the tRNA binding site. His-19 (proton acceptor) is an active-site residue. TRNA is bound by residues Phe-61, Asn-63, and Asn-107.

It belongs to the PTH family. In terms of assembly, monomer.

It is found in the cytoplasm. It catalyses the reaction an N-acyl-L-alpha-aminoacyl-tRNA + H2O = an N-acyl-L-amino acid + a tRNA + H(+). In terms of biological role, hydrolyzes ribosome-free peptidyl-tRNAs (with 1 or more amino acids incorporated), which drop off the ribosome during protein synthesis, or as a result of ribosome stalling. Its function is as follows. Catalyzes the release of premature peptidyl moieties from peptidyl-tRNA molecules trapped in stalled 50S ribosomal subunits, and thus maintains levels of free tRNAs and 50S ribosomes. The polypeptide is Peptidyl-tRNA hydrolase (Campylobacter fetus subsp. fetus (strain 82-40)).